The primary structure comprises 59 residues: Salivary thrombin inhibitor XC-43 (59 aa).

Positions 1–23 (MNLQFLFIFIAFCVMLFAQIVTA) are cleaved as a signal peptide.

Interacts with human F2 (thrombin). As to expression, salivary gland (at protein level).

It localises to the secreted. Functionally, anticoagulant protein that acts as a competitive inhibitor of host thrombin. Inhibits thrombin-mediated host platelet aggregation. In Xenopsylla cheopis (Oriental rat flea), this protein is Salivary thrombin inhibitor XC-43.